A 106-amino-acid polypeptide reads, in one-letter code: Iron-sulfur cluster assembly protein CyaY (106 aa).

It belongs to the frataxin family.

In terms of biological role, involved in iron-sulfur (Fe-S) cluster assembly. May act as a regulator of Fe-S biogenesis. This chain is Iron-sulfur cluster assembly protein CyaY, found in Salmonella arizonae (strain ATCC BAA-731 / CDC346-86 / RSK2980).